The sequence spans 270 residues: L-cystine-binding protein TcyK (270 aa).

Positions 1-20 are cleaved as a signal peptide; sequence MKTKTAFMAILFSLITVLSA. Residue C21 is the site of N-palmitoyl cysteine attachment. Residue C21 is the site of S-diacylglycerol cysteine attachment.

Belongs to the bacterial solute-binding protein 3 family. The complex is composed of two ATP-binding proteins (TcyN), two transmembrane proteins (TcyL and TcyM) and two solute-binding proteins (TcyJ and TcyK).

It is found in the cell membrane. In terms of biological role, part of the ABC transporter complex TcyJKLMN involved in L-cystine import. Is also involved in cystathionine, djenkolate, and S-methylcysteine transport. The chain is L-cystine-binding protein TcyK (tcyK) from Bacillus subtilis (strain 168).